A 74-amino-acid chain; its full sequence is Porwaprin-a (74 aa).

The N-terminal stretch at 1-24 (MSSGGLLLLLGLLTLWEVLTPVSS) is a signal peptide. Residues 27–71 (RPKKLGLCPPRPQKPCVKECKNDWSCPGQQKCCNYGCIDECRDPI) form the WAP domain. Intrachain disulfides connect Cys34/Cys59, Cys42/Cys63, Cys46/Cys58, and Cys52/Cys67.

It belongs to the venom waprin family. In terms of tissue distribution, expressed by the venom gland.

The protein resides in the secreted. In terms of biological role, damages membranes of susceptible bacteria. Has no hemolytic activity. Not toxic to mice. Does not inhibit the proteinases elastase and cathepsin G. The sequence is that of Porwaprin-a from Pseudechis porphyriacus (Red-bellied black snake).